We begin with the raw amino-acid sequence, 231 residues long: NADH-ubiquinone oxidoreductase chain 4 (231 aa).

Transmembrane regions (helical) follow at residues 1-21 (PIAG…YGII), 34-54 (MFLP…LTCL), 61-80 (SLIA…AIII), 84-106 (WGLT…LFCL), 128-148 (ILPM…ATPP), and 169-189 (TIIL…HMFL).

This sequence belongs to the complex I subunit 4 family.

The protein resides in the mitochondrion membrane. The enzyme catalyses a ubiquinone + NADH + 5 H(+)(in) = a ubiquinol + NAD(+) + 4 H(+)(out). Functionally, core subunit of the mitochondrial membrane respiratory chain NADH dehydrogenase (Complex I) that is believed to belong to the minimal assembly required for catalysis. Complex I functions in the transfer of electrons from NADH to the respiratory chain. The immediate electron acceptor for the enzyme is believed to be ubiquinone. This chain is NADH-ubiquinone oxidoreductase chain 4 (MT-ND4), found in Atropoides picadoi (Picado's pit viper).